The chain runs to 209 residues: LexA repressor (209 aa).

Residues 29–49 (VREIGSAIGLSSTSTVHGHID) constitute a DNA-binding region (H-T-H motif). Residues serine 130 and lysine 168 each act as for autocatalytic cleavage activity in the active site.

It belongs to the peptidase S24 family. In terms of assembly, homodimer.

The catalysed reaction is Hydrolysis of Ala-|-Gly bond in repressor LexA.. Represses a number of genes involved in the response to DNA damage (SOS response), including recA and lexA. In the presence of single-stranded DNA, RecA interacts with LexA causing an autocatalytic cleavage which disrupts the DNA-binding part of LexA, leading to derepression of the SOS regulon and eventually DNA repair. This chain is LexA repressor, found in Pediococcus pentosaceus (strain ATCC 25745 / CCUG 21536 / LMG 10740 / 183-1w).